A 279-amino-acid chain; its full sequence is Secreted RxLR effector protein 90 (279 aa).

The N-terminal stretch at 1–19 (MKSAAAFATFLTLSVFVAT) is a signal peptide. The short motif at 29–46 (RGLRSLADNQSTESSEGR) is the RxLR-dEER element. Disordered regions lie at residues 29–53 (RGLRSLADNQSTESSEGRKDHYNHH) and 135–176 (ATPA…NLAG). A glycan (N-linked (GlcNAc...) asparagine) is linked at asparagine 37. Residues 135-146 (ATPAPTTSVPSS) are compositionally biased toward low complexity. Over residues 147–163 (LVNTDTSDNQLPTTPVA) the composition is skewed to polar residues. Residues 166–176 (QGGGIGSNLAG) are compositionally biased toward gly residues. N-linked (GlcNAc...) asparagine glycosylation occurs at asparagine 217.

This sequence belongs to the RxLR effector family.

Its subcellular location is the secreted. The protein resides in the host cell membrane. Secreted effector that completely suppresses the host cell death induced by cell death-inducing proteins. The polypeptide is Secreted RxLR effector protein 90 (Plasmopara viticola (Downy mildew of grapevine)).